The sequence spans 410 residues: Platelet-activating factor acetylhydrolase IB subunit alpha (410 aa).

Residues 1 to 38 (MVLSQRQRDELNRAIADYLRSNGYEEAYSVFKKEAELD) are required for self-association and interaction with PAFAH1B2 and PAFAH1B3. The segment at 1 to 66 (MVLSQRQRDE…SVIRLQKKVM (66 aa)) is interaction with NDE1. Residues 1 to 102 (MVLSQRQRDE…EWIPRPPEKY (102 aa)) are interaction with NDEL1. Positions 7–39 (QRDELNRAIADYLRSNGYEEAYSVFKKEAELDM) constitute a LisH domain. Lys-53 is modified (N6-acetyllysine). The stretch at 56 to 82 (TSVIRLQKKVMELESKLNEAKEEFTSG) forms a coiled coil. Positions 83–410 (GPLGQKRDPK…DQTVKVWECR (328 aa)) are interaction with dynein and dynactin. WD repeat units follow at residues 106–147 (GHRS…RTLK), 148–187 (GHTD…CIRT), 190–229 (GHDH…CVKT), 232–271 (GHRE…CKAE), 274–333 (EHEH…CLMT), 336–377 (GHDN…KTLN), and 378–410 (AHEH…WECR). At Ser-109 the chain carries Phosphoserine. Residues 367–409 (YKNKRCMKTLNAHEHFVTSLDFHKTAPYVVTGSVDQTVKVWEC) are interaction with DCX. Positions 388–410 (FHKTAPYVVTGSVDQTVKVWECR) are interaction with NDEL1.

Belongs to the WD repeat LIS1/nudF family. Can self-associate. Component of the cytosolic PAF-AH (I) heterotetrameric enzyme, which is composed of PAFAH1B1 (beta), PAFAH1B2 (alpha2) and PAFAH1B3 (alpha1) subunits. The catalytic activity of the enzyme resides in the alpha1 (PAFAH1B3) and alpha2 (PAFAH1B2) subunits, whereas the beta subunit (PAFAH1B1) has regulatory activity. Trimer formation is not essential for the catalytic activity. Interacts with the catalytic dimer of PAF-AH (I) heterotetrameric enzyme: interacts with PAFAH1B2 homodimer (alpha2/alpha2 homodimer), PAFAH1B3 homodimer (alpha1/alpha1 homodimer) and PAFAH1B2-PAFAH1B3 heterodimer (alpha2/alpha1 heterodimer). Interacts with DCX, dynein, dynactin, IQGAP1, KATNB1, NDE1, NDEL1, NUDC and RSN. Interacts with DISC1, and this interaction is enhanced by NDEL1. Interacts with DAB1 when DAB1 is phosphorylated in response to RELN/reelin signaling. Interacts with INTS13. Interacts with DCDC1.

It is found in the cytoplasm. Its subcellular location is the cytoskeleton. It localises to the microtubule organizing center. The protein resides in the centrosome. The protein localises to the spindle. It is found in the nucleus membrane. Its function is as follows. Regulatory subunit (beta subunit) of the cytosolic type I platelet-activating factor (PAF) acetylhydrolase (PAF-AH (I)), an enzyme that catalyzes the hydrolyze of the acetyl group at the sn-2 position of PAF and its analogs and participates in PAF inactivation. Regulates the PAF-AH (I) activity in a catalytic dimer composition-dependent manner. Positively regulates the activity of the minus-end directed microtubule motor protein dynein. May enhance dynein-mediated microtubule sliding by targeting dynein to the microtubule plus end. Required for several dynein- and microtubule-dependent processes such as the maintenance of Golgi integrity, the peripheral transport of microtubule fragments and the coupling of the nucleus and centrosome. Required during brain development for the proliferation of neuronal precursors and the migration of newly formed neurons from the ventricular/subventricular zone toward the cortical plate. Neuronal migration involves a process called nucleokinesis, whereby migrating cells extend an anterior process into which the nucleus subsequently translocates. During nucleokinesis dynein at the nuclear surface may translocate the nucleus towards the centrosome by exerting force on centrosomal microtubules. Also required for proper activation of Rho GTPases and actin polymerization at the leading edge of locomoting cerebellar neurons and postmigratory hippocampal neurons in response to calcium influx triggered via NMDA receptors. May also play a role in other forms of cell locomotion including the migration of fibroblasts during wound healing. Required for dynein recruitment to microtubule plus ends and BICD2-bound cargos. May modulate the Reelin pathway through interaction of the PAF-AH (I) catalytic dimer with VLDLR. This chain is Platelet-activating factor acetylhydrolase IB subunit alpha, found in Sus scrofa (Pig).